We begin with the raw amino-acid sequence, 337 residues long: MISVAINGYGTIGKRVADAVAAQDDMKVAGVSKTKPDFEARVAIEKGYDLYVSIPEREKLFGEAGIPVSGTVEDMLEEADIVVDATPEGIGAKNLEMYREKGIKAIFQGGEKHDAIGLSFNSFANYDESLGADYTRVVSCNTTGLCRTLKPIDDLCGIKKVRAVMVRRGADPVQVKKGPINAIVPNPPTVPSHHGPDLKTVMKGVNIHTVALLVPTTLMHQHNIMVELEDPVEADEIKARLDETTRVMLVRASEGLASTAEIMEYAKELGRSRNDLFEIPVWEESINVVDGELFYMQAVHQESDAVPESVDAIRALLELEEDNMKSIMKTNRAMGIL.

Residues 11–12 (TI) and glycine 110 contribute to the NAD(+) site. Position 139–141 (139–141 (SCN)) interacts with D-glyceraldehyde 3-phosphate. The active-site Nucleophile is cysteine 140. Arginine 168 contributes to the NAD(+) binding site. Residue 194–195 (HG) participates in D-glyceraldehyde 3-phosphate binding. NAD(+) is bound at residue glutamine 301.

The protein belongs to the glyceraldehyde-3-phosphate dehydrogenase family. As to quaternary structure, homotetramer.

It localises to the cytoplasm. The enzyme catalyses D-glyceraldehyde 3-phosphate + phosphate + NADP(+) = (2R)-3-phospho-glyceroyl phosphate + NADPH + H(+). It carries out the reaction D-glyceraldehyde 3-phosphate + phosphate + NAD(+) = (2R)-3-phospho-glyceroyl phosphate + NADH + H(+). Its pathway is carbohydrate degradation; glycolysis; pyruvate from D-glyceraldehyde 3-phosphate: step 1/5. This chain is Glyceraldehyde-3-phosphate dehydrogenase (gap), found in Methanothermobacter thermautotrophicus (strain ATCC 29096 / DSM 1053 / JCM 10044 / NBRC 100330 / Delta H) (Methanobacterium thermoautotrophicum).